A 423-amino-acid polypeptide reads, in one-letter code: UDP-N-acetylglucosamine 1-carboxyvinyltransferase 2 (423 aa).

23 to 24 (KN) contacts phosphoenolpyruvate. Position 93 (R93) interacts with UDP-N-acetyl-alpha-D-glucosamine. The active-site Proton donor is the C117. C117 carries the 2-(S-cysteinyl)pyruvic acid O-phosphothioketal modification. Residues 122–126 (RPIDQ), D305, and I327 each bind UDP-N-acetyl-alpha-D-glucosamine.

It belongs to the EPSP synthase family. MurA subfamily.

It is found in the cytoplasm. The catalysed reaction is phosphoenolpyruvate + UDP-N-acetyl-alpha-D-glucosamine = UDP-N-acetyl-3-O-(1-carboxyvinyl)-alpha-D-glucosamine + phosphate. It participates in cell wall biogenesis; peptidoglycan biosynthesis. Its function is as follows. Cell wall formation. Adds enolpyruvyl to UDP-N-acetylglucosamine. The protein is UDP-N-acetylglucosamine 1-carboxyvinyltransferase 2 of Listeria monocytogenes serotype 4b (strain F2365).